The sequence spans 594 residues: Elongation factor 4 (594 aa).

The 183-residue stretch at 2–184 (KNIRNFSIIA…TIVAKVPAPE (183 aa)) folds into the tr-type G domain. GTP is bound by residues 14 to 19 (DHGKST) and 131 to 134 (NKID).

It belongs to the TRAFAC class translation factor GTPase superfamily. Classic translation factor GTPase family. LepA subfamily.

Its subcellular location is the cell inner membrane. It carries out the reaction GTP + H2O = GDP + phosphate + H(+). Its function is as follows. Required for accurate and efficient protein synthesis under certain stress conditions. May act as a fidelity factor of the translation reaction, by catalyzing a one-codon backward translocation of tRNAs on improperly translocated ribosomes. Back-translocation proceeds from a post-translocation (POST) complex to a pre-translocation (PRE) complex, thus giving elongation factor G a second chance to translocate the tRNAs correctly. Binds to ribosomes in a GTP-dependent manner. In Francisella tularensis subsp. holarctica (strain FTNF002-00 / FTA), this protein is Elongation factor 4.